The following is a 100-amino-acid chain: Dromyosuppressin (100 aa).

The signal sequence occupies residues 1 to 24 (MSFAQFFVACCLAIVLLAVSNTRA). The propeptide occupies 25–84 (AVQGPPLCQSGIVEEMPPHIRKVCQALENSDQLTSALKSYINNEASALVANSDDLLKNYN). Phenylalanine 96 carries the phenylalanine amide modification.

This sequence belongs to the myosuppressin family.

The protein localises to the secreted. Myoinhibiting neuropeptide. The polypeptide is Dromyosuppressin (Drosophila melanogaster (Fruit fly)).